A 262-amino-acid chain; its full sequence is E3 ubiquitin-protein ligase NEURL3 (262 aa).

The 157-residue stretch at 17 to 173 folds into the NHR domain; that stretch reads ALRFHAEAKG…TTKAIELLDP (157 aa). Residues 202–241 form an RING-type zinc finger; it reads CAICFYHAANTRLVPCGHTYFCRYCAWRVFSDTAKCPVCR.

As to quaternary structure, (Microbial infection) Interacts with hepatitis C virus protein E1; this interaction prevents E1 interaction with E2 and subsequently inhibits viral infection.

It localises to the cytoplasm. The catalysed reaction is S-ubiquitinyl-[E2 ubiquitin-conjugating enzyme]-L-cysteine + [acceptor protein]-L-lysine = [E2 ubiquitin-conjugating enzyme]-L-cysteine + N(6)-ubiquitinyl-[acceptor protein]-L-lysine.. It participates in protein modification; protein ubiquitination. Its function is as follows. E3 ubiquitin-protein ligase that plays a role in various biological processes such as lung development or innate immunity. Seems to utilize UBE2E1. Promotes innate antiviral response by catalyzing 'Lys-63'-linked ubiquitination of IRF7. Also inhibits hepatitis C virus assembly by directly binding to viral E1 envelope glycoprotein to disrupt its interaction with E2. Plays an essential role in TLR4-mediated activation of MAPK pathways by promoting 'Lys-48'-linked polyubiquitination of the phosphatase DUSP1/MKP1. The polypeptide is E3 ubiquitin-protein ligase NEURL3 (NEURL3) (Homo sapiens (Human)).